Here is a 198-residue protein sequence, read N- to C-terminus: Endothelin-3 (198 aa).

An N-terminal signal peptide occupies residues 1–16 (MEPGLWLLFGLTVTSA). Residues 17–86 (AGLVPCPQPG…SKGGPVHGRA (70 aa)) constitute a propeptide that is removed on maturation. The interval 22-79 (CPQPGDAGKSGVPGTPPTARSEGDIQEPVAMTAVQGPSPRSPEQEQELGRFGEQASKG) is disordered. Cystine bridges form between Cys-89-Cys-103 and Cys-91-Cys-99. The propeptide occupies 110 to 198 (INTPEQTVPY…RGNGGLRPTR (89 aa)). The endothelin-like stretch occupies residues 150–164 (CACVQSQDSACLHFC). A disordered region spans residues 174 to 198 (SRTATNPDKEEEPASRGNGGLRPTR).

Belongs to the endothelin/sarafotoxin family. In terms of tissue distribution, expressed in which included heart, lung, liver, kidney, spleen, stomach, pancreas, duodenum, colon, uterus, ovary and testis.

It is found in the secreted. Its function is as follows. Endothelins are endothelium-derived vasoconstrictor peptides. This is Endothelin-3 (EDN3) from Canis lupus familiaris (Dog).